Consider the following 1023-residue polypeptide: Peroxisome proliferator-activated receptor gamma coactivator 1-beta (1023 aa).

Positions 1–91 (MAGNDCGALL…LFQIDSENEA (91 aa)) are abolishes DNA transcriptional activity when missing. The segment at 122–148 (LSCTSASPAPSSAPPSPAPEKPSAPAP) is disordered. Positions 132–146 (SSAPPSPAPEKPSAP) are enriched in pro residues. An LXXLL motif 1 motif is present at residues 156–160 (LQKLL). Disordered stretches follow at residues 165-210 (YPTS…QSQS), 237-278 (LQSP…PGAP), and 302-331 (RKLPPQTPEPLPKACSNPSQQVRSRPWSRH). Positions 343–347 (LRELL) match the LXXLL motif 2 motif. Disordered regions lie at residues 369 to 463 (LTPR…LPWT), 520 to 567 (RELG…QLPP), 601 to 623 (TAGLTPPTTPPYKPTEEDPFKPD), and 636 to 683 (LPSP…GQKR). Position 384 is a phosphoserine (serine 384). The segment covering 412 to 422 (LRLEVKREVRR) has biased composition (basic and acidic residues). The span at 429 to 450 (QEEEDEEEEEEEEEEEKEEEEE) shows a compositional bias: acidic residues. Residue serine 524 is modified to Phosphoserine. Residues 614 to 623 (PTEEDPFKPD) show a composition bias toward basic and acidic residues. Position 638 is a phosphoserine (serine 638). The HCFC1-binding-motif (HBM) signature appears at 691-694 (DHDY). Disordered stretches follow at residues 717 to 758 (VHLE…LRDH) and 779 to 867 (DLAS…WSPA). A compositionally biased stretch (low complexity) spans 793–805 (EDSSSSSGESSFL). The segment covering 806 to 825 (PEEEEEEGEEEEEDDEEEDS) has biased composition (acidic residues). Positions 849–866 (CSRSRSSSGSSPCHSWSP) are enriched in low complexity. Residues 902 to 976 (RVVYIQNLSS…RNEPSFQLSY (75 aa)) enclose the RRM domain.

Interacts with hepatocyte nuclear factor 4-alpha/HNF4A, Sterol regulatory binding transcription factor 1/SREBF1, PPAR-alpha/PPARA, thyroid hormone receptor beta/THRB and host cell factor/HCFC1. Interacts with estrogen-related receptor gamma/ESRRG and alpha/ESRRA. Interacts with PRDM16. Interacts with estrogen receptor alpha/ESR1. In terms of tissue distribution, ubiquitous with higher expression in heart, brain and skeletal muscle.

Its subcellular location is the nucleus. In terms of biological role, plays a role of stimulator of transcription factors and nuclear receptors activities. Activates transcriptional activity of estrogen receptor alpha, nuclear respiratory factor 1 (NRF1) and glucocorticoid receptor in the presence of glucocorticoids. May play a role in constitutive non-adrenergic-mediated mitochondrial biogenesis as suggested by increased basal oxygen consumption and mitochondrial number when overexpressed. May be involved in fat oxidation and non-oxidative glucose metabolism and in the regulation of energy expenditure. Induces the expression of PERM1 in the skeletal muscle in an ESRRA-dependent manner. The polypeptide is Peroxisome proliferator-activated receptor gamma coactivator 1-beta (PPARGC1B) (Homo sapiens (Human)).